A 283-amino-acid chain; its full sequence is Acetylglutamate kinase (283 aa).

Substrate-binding positions include G63–G64, R85, and N179.

Belongs to the acetylglutamate kinase family. ArgB subfamily.

Its subcellular location is the cytoplasm. It carries out the reaction N-acetyl-L-glutamate + ATP = N-acetyl-L-glutamyl 5-phosphate + ADP. Its pathway is amino-acid biosynthesis; L-arginine biosynthesis; N(2)-acetyl-L-ornithine from L-glutamate: step 2/4. In terms of biological role, catalyzes the ATP-dependent phosphorylation of N-acetyl-L-glutamate. The chain is Acetylglutamate kinase from Clostridium kluyveri (strain NBRC 12016).